The primary structure comprises 1014 residues: Nebulette (1014 aa).

Residues 1-24 (MRVPVFEDIKDETEEEKIGEEENE) form a disordered region. Residues 9-24 (IKDETEEEKIGEEENE) are compositionally biased toward acidic residues. Nebulin repeat units lie at residues 29–63 (FYKP…KSKD), 64–99 (KCTF…DLSN), 100–136 (SLYK…AKGF), 137–172 (SDYA…DTHT), 173–205 (YSAE…GIMN), 206–241 (KEPA…EMKD), 242–278 (KKHH…NMHD), 279–313 (PVSD…ENKG), 314–348 (MYHF…KNKG), 349–385 (KPML…EIKG), 386–422 (RSSL…EIKG), 423–459 (KGME…IIKG), 460–496 (KGMQ…EIKG), 497–533 (KGMQ…EIKG), 534–569 (KGMQ…KMLS), 570–599 (NYST…KKEV), 600–635 (GAGT…HATA), 636–666 (ISDP…KATP), 667–693 (VSMT…GELQ), 694–728 (RGTA…RATT), 729–759 (LSVT…QMKG), 760–794 (RPSL…KTKG), and 795–830 (RGFT…HIVE). Residue D96 is modified to Omega-N-methylarginine. Position 795 is an omega-N-methylarginine (R795). Residues 836 to 953 (GIIVDLKVWR…VSSMRSMQHS (118 aa)) form a linker region. An SH3 domain is found at 954–1014 (PNLRTYRAMY…LPANYIEFVN (61 aa)).

Interacts (via nebulin repeats 1-5) with DESM (via rod region). Interacts (via SH3 domain) with XIRP2. As to quaternary structure, interacts with ZYX/Zyxin. In terms of tissue distribution, abundantly expressed in cardiac muscle, but not in skeletal or smooth muscle. Localized to Z-lines in cardiac cells and to dense bodies in nonmuscle cells. Isoform 2 is expressed in non-muscle cells such as in fibroblasts.

The protein resides in the cytoplasm. Functionally, binds to actin and plays an important role in the assembly of the Z-disk. May functionally link sarcomeric actin to the desmin intermediate filaments in the heart muscle sarcomeres. Its function is as follows. May play a role in the assembly of focal adhesions. The chain is Nebulette from Homo sapiens (Human).